The chain runs to 292 residues: Protease HtpX (292 aa).

2 helical membrane passes run 5–25 (VVLF…VMSV) and 34–54 (SGLL…SLLL). Histidine 140 contacts Zn(2+). The active site involves glutamate 141. Residue histidine 144 coordinates Zn(2+). 2 helical membrane-spanning segments follow: residues 155–175 (LLQG…GGII) and 193–213 (IIVF…AMWF). Glutamate 218 provides a ligand contact to Zn(2+).

It belongs to the peptidase M48B family. The cofactor is Zn(2+).

The protein localises to the cell inner membrane. The protein is Protease HtpX of Xanthomonas campestris pv. campestris (strain B100).